We begin with the raw amino-acid sequence, 65 residues long: Prokaryotic ubiquitin-like protein Pup (65 aa).

A compositionally biased stretch (basic and acidic residues) spans 1–14 (MSGHEQQRPSRREE). The disordered stretch occupies residues 1-35 (MSGHEQQRPSRREEDVEETPVVPAQAGAQAKESDA). The interval 21–59 (VVPAQAGAQAKESDADVDALLDEIDEVLESNSEEFVRGF) is ARC ATPase binding. A coiled-coil region spans residues 26-49 (AGAQAKESDADVDALLDEIDEVLE). At Gln65 the chain carries Deamidated glutamine. Gln65 participates in a covalent cross-link: Isoglutamyl lysine isopeptide (Gln-Lys) (interchain with K-? in acceptor proteins).

It belongs to the prokaryotic ubiquitin-like protein family. As to quaternary structure, strongly interacts with the proteasome-associated ATPase ARC through a hydrophobic interface; the interacting region of Pup lies in its C-terminal half. There is one Pup binding site per ARC hexamer ring. Is modified by deamidation of its C-terminal glutamine to glutamate by the deamidase Dop, a prerequisite to the subsequent pupylation process.

Its pathway is protein degradation; proteasomal Pup-dependent pathway. Its function is as follows. Protein modifier that is covalently attached to lysine residues of substrate proteins, thereby targeting them for proteasomal degradation. The tagging system is termed pupylation. In Kineococcus radiotolerans (strain ATCC BAA-149 / DSM 14245 / SRS30216), this protein is Prokaryotic ubiquitin-like protein Pup.